A 248-amino-acid polypeptide reads, in one-letter code: UDP-2,3-diacylglucosamine hydrolase (248 aa).

Residues Asp-8, His-10, Asp-41, Asn-79, and His-114 each coordinate Mn(2+). 79–80 (NR) contacts substrate. Asp-122, Asn-164, Arg-167, and His-195 together coordinate substrate. The Mn(2+) site is built by His-195 and His-197.

This sequence belongs to the LpxH family. It depends on Mn(2+) as a cofactor.

It localises to the cell inner membrane. It carries out the reaction UDP-2-N,3-O-bis[(3R)-3-hydroxytetradecanoyl]-alpha-D-glucosamine + H2O = 2-N,3-O-bis[(3R)-3-hydroxytetradecanoyl]-alpha-D-glucosaminyl 1-phosphate + UMP + 2 H(+). The protein operates within glycolipid biosynthesis; lipid IV(A) biosynthesis; lipid IV(A) from (3R)-3-hydroxytetradecanoyl-[acyl-carrier-protein] and UDP-N-acetyl-alpha-D-glucosamine: step 4/6. In terms of biological role, hydrolyzes the pyrophosphate bond of UDP-2,3-diacylglucosamine to yield 2,3-diacylglucosamine 1-phosphate (lipid X) and UMP by catalyzing the attack of water at the alpha-P atom. Involved in the biosynthesis of lipid A, a phosphorylated glycolipid that anchors the lipopolysaccharide to the outer membrane of the cell. This is UDP-2,3-diacylglucosamine hydrolase from Wigglesworthia glossinidia brevipalpis.